Here is a 492-residue protein sequence, read N- to C-terminus: MEPNNVERNLQSLRRLYSLLVANARNEYIPEAYKLDDNTQFLLKRLLDFASHEHFVTQSNLLATQLRVFPKTVLHGAKPSNVADSSETTPPAMLSQINGSHITRVSKPLEAKGTLQRDLRVDQIRSNPSKDVLTEEVVDAIEQIDTQLSALSFVSSRVDSDERTRSVKSFVTPPTEECRQNSQASMPCLRSNYMTVSQKSVISGAEVTFPYNDQLVRVTSPPQPLPPRAVSGFKKPNQSNRASQKMPIMKPTLMDQETETFDDDSSETEADQTPSATGSESEDEEVSTSQEYSGETGSSSGSEWETQAENDTESKSESSYPPQNDDSVSEVSTSPPHTDRDTSREPGKQRRNVMGRFKRIKNKIGQIFHHHHHHHHHHHHHDKEKPSAWNKLQSKFHHKHQEKSKERKRPMSESKGLTTHKQQHQGGHFHALVEGLVRHRKHSKKQKHQLKSDAKKTEWWKLLKKRQGGGVKIPKRGRVKLGKKKHYLSKNV.

Disordered stretches follow at residues 218-354 and 394-426; these read VTSP…RNVM and SKFHHKHQEKSKERKRPMSESKGLTTHKQQHQG. Residues 256–270 show a composition bias toward acidic residues; it reads QETETFDDDSSETEA. Residues 287–305 are compositionally biased toward low complexity; that stretch reads STSQEYSGETGSSSGSEWE. The segment covering 317–336 has biased composition (polar residues); the sequence is ESSYPPQNDDSVSEVSTSPP. Composition is skewed to basic and acidic residues over residues 337-348 and 403-412; these read HTDRDTSREPGK and KSKERKRPMS.

Mostly expressed in pollen and open flowers and, to a lower extent, in closed flowers.

In terms of biological role, positively regulates reproductive function by facilitating male gametophyte formation and double fertilization. The protein is Protein KOKOPELLI of Arabidopsis thaliana (Mouse-ear cress).